The chain runs to 74 residues: Translation initiation factor IF-1 (74 aa).

The region spanning 1 to 72 is the S1-like domain; it reads MGKEDVIRME…TRGRIVYRKK (72 aa).

It belongs to the IF-1 family. As to quaternary structure, component of the 30S ribosomal translation pre-initiation complex which assembles on the 30S ribosome in the order IF-2 and IF-3, IF-1 and N-formylmethionyl-tRNA(fMet); mRNA recruitment can occur at any time during PIC assembly.

The protein localises to the cytoplasm. Its function is as follows. One of the essential components for the initiation of protein synthesis. Stabilizes the binding of IF-2 and IF-3 on the 30S subunit to which N-formylmethionyl-tRNA(fMet) subsequently binds. Helps modulate mRNA selection, yielding the 30S pre-initiation complex (PIC). Upon addition of the 50S ribosomal subunit IF-1, IF-2 and IF-3 are released leaving the mature 70S translation initiation complex. This Thermotoga petrophila (strain ATCC BAA-488 / DSM 13995 / JCM 10881 / RKU-1) protein is Translation initiation factor IF-1.